Consider the following 512-residue polypeptide: V-type proton ATPase subunit B (512 aa).

Arg381 is an ATP binding site. The segment at 484-512 (LYGRDREQDDDEDEDEEDPDKSGDKLIDA) is disordered. The span at 491-502 (QDDDEDEDEEDP) shows a compositional bias: acidic residues. Positions 503-512 (DKSGDKLIDA) are enriched in basic and acidic residues.

This sequence belongs to the ATPase alpha/beta chains family. V-ATPase is a heteromultimeric enzyme composed of a peripheral catalytic V1 complex (components A to H) attached to an integral membrane V0 proton pore complex (components: a, c, c', c'', d, e, f and VOA1).

It is found in the vacuole membrane. In terms of biological role, non-catalytic subunit of the V1 complex of vacuolar(H+)-ATPase (V-ATPase), a multisubunit enzyme composed of a peripheral complex (V1) that hydrolyzes ATP and a membrane integral complex (V0) that translocates protons. Plays an important role in resistance to several stresses, as well as in autophagy and virulence. The chain is V-type proton ATPase subunit B from Candida albicans (strain SC5314 / ATCC MYA-2876) (Yeast).